Consider the following 91-residue polypeptide: Acylphosphatase (91 aa).

Positions 6–91 constitute an Acylphosphatase-like domain; it reads CMRCYISGRV…WEDYISFDVL (86 aa). Catalysis depends on residues Arg-21 and Asn-39.

This sequence belongs to the acylphosphatase family.

It catalyses the reaction an acyl phosphate + H2O = a carboxylate + phosphate + H(+). The sequence is that of Acylphosphatase (acyP) from Legionella pneumophila (strain Corby).